We begin with the raw amino-acid sequence, 101 residues long: NADH-quinone oxidoreductase subunit K (101 aa).

A run of 3 helical transmembrane segments spans residues 4-24 (LSHF…GIFL), 30-50 (IVLL…FIAF), and 61-81 (VFVF…LAIL).

It belongs to the complex I subunit 4L family. As to quaternary structure, NDH-1 is composed of 14 different subunits. Subunits NuoA, H, J, K, L, M, N constitute the membrane sector of the complex.

The protein resides in the cell inner membrane. The enzyme catalyses a quinone + NADH + 5 H(+)(in) = a quinol + NAD(+) + 4 H(+)(out). Functionally, NDH-1 shuttles electrons from NADH, via FMN and iron-sulfur (Fe-S) centers, to quinones in the respiratory chain. The immediate electron acceptor for the enzyme in this species is believed to be ubiquinone. Couples the redox reaction to proton translocation (for every two electrons transferred, four hydrogen ions are translocated across the cytoplasmic membrane), and thus conserves the redox energy in a proton gradient. This Thiobacillus denitrificans (strain ATCC 25259 / T1) protein is NADH-quinone oxidoreductase subunit K.